The following is a 142-amino-acid chain: 5a,11a-dehydrotetracycline/5a,11a-dehydrooxytetracycline reductase (142 aa).

This sequence belongs to the pyridoxamine 5'-phosphate oxidase family.

It carries out the reaction tetracycline + oxidized coenzyme F420-(gamma-L-Glu)(n) + H(+) = 5a,11a-dehydrotetracycline + reduced coenzyme F420-(gamma-L-Glu)(n). The enzyme catalyses oxytetracycline + oxidized coenzyme F420-(gamma-L-Glu)(n) + H(+) = 5a,11a-dehydrooxytetracycline + reduced coenzyme F420-(gamma-L-Glu)(n). The protein operates within antibiotic biosynthesis; oxytetracycline biosynthesis. In terms of biological role, involved in the biosynthesis of the antibiotics tetracycline and oxytetracycline. Catalyzes the C(5) reduction of 5a,11a-dehydrooxytetracycline to yield oxytetracycline as a major product. Also catalyzes the C(12) reduction of 5a,11a-dehydrotetracycline (12-dehydrotetracycline) to produce tetracycline as a minor product. This Streptomyces rimosus subsp. rimosus (strain ATCC 10970 / DSM 40260 / JCM 4667 / NRRL 2234) protein is 5a,11a-dehydrotetracycline/5a,11a-dehydrooxytetracycline reductase.